Reading from the N-terminus, the 493-residue chain is MERKFSDQELIRRTHLQELKNQNKNPFLITKVDRSMFLKDFAEKYKNFSKEELHNMDLEKLTLAGRLIGIRQTFGIIQDFSAKLQIYINKKNVAPEVFSTFKSLDIGDIIELEGVAMKTNSDEITLNVTNIRLVAKSLKVLPEKYHGLVDEEIKARQRYLDLIVNDETKNTFIKRSLIIREMRNWLDNKGFFEVETPVLQDILSGAAARPFITHHNTLNKEYYLRIATEIALKKCIIGGFEKVYEIGRIFRNEGMDSTHNPEFTSVELYIAYVDLWYIMQLTEDLIRHIATKLNLLNPTFRGFSIDLNKPFKKAHMVDLINEYVGVNFFEVKSDEQAIELAKKHHVKLLDHQKNFGHIVNAFFETFVEEKLVEPTFVYGHPLQVSPLTKKNQSDPRFVDRFELFICQKEFANAYSEINDPIDQYERFIAQLEEAKLGNDEASELDMEFIEALEYGMPPTGGLGIGVDRLVMLLTSNDSIRNVLLFPHMKDKTK.

2 residues coordinate Mg(2+): glutamate 402 and glutamate 409.

It belongs to the class-II aminoacyl-tRNA synthetase family. Homodimer. Mg(2+) is required as a cofactor.

The protein localises to the cytoplasm. The enzyme catalyses tRNA(Lys) + L-lysine + ATP = L-lysyl-tRNA(Lys) + AMP + diphosphate. This is Lysine--tRNA ligase from Ureaplasma parvum serovar 3 (strain ATCC 27815 / 27 / NCTC 11736).